The following is a 181-amino-acid chain: ATP-dependent protease subunit HslV (181 aa).

T7 is a catalytic residue. G166, C169, and T172 together coordinate Na(+).

Belongs to the peptidase T1B family. HslV subfamily. A double ring-shaped homohexamer of HslV is capped on each side by a ring-shaped HslU homohexamer. The assembly of the HslU/HslV complex is dependent on binding of ATP.

The protein resides in the cytoplasm. The catalysed reaction is ATP-dependent cleavage of peptide bonds with broad specificity.. Allosterically activated by HslU binding. Protease subunit of a proteasome-like degradation complex believed to be a general protein degrading machinery. This Variovorax paradoxus (strain S110) protein is ATP-dependent protease subunit HslV.